The primary structure comprises 822 residues: Probable alpha,alpha-trehalose-phosphate synthase [UDP-forming] 2 (822 aa).

The tract at residues Pro-12–Gly-479 is glycosyltransferase.

The protein in the N-terminal section; belongs to the glycosyltransferase 20 family. It in the C-terminal section; belongs to the trehalose phosphatase family.

It catalyses the reaction D-glucose 6-phosphate + UDP-alpha-D-glucose = alpha,alpha-trehalose 6-phosphate + UDP + H(+). The protein is Probable alpha,alpha-trehalose-phosphate synthase [UDP-forming] 2 (TPS2) of Arabidopsis thaliana (Mouse-ear cress).